We begin with the raw amino-acid sequence, 637 residues long: ATP-dependent RNA helicase DBP6 (637 aa).

The disordered stretch occupies residues 1–93; that stretch reads MFAVRFDPSQ…AASDHPDKHN (93 aa). Over residues 33–84 the composition is skewed to acidic residues; it reads DEEDESSEEETESSEDEEEKEKEEVADEDSMDVDDESSGDDDEEAEEGEVDA. Positions 198–206 match the Q motif motif; that stretch reads TFPIQSILL. Positions 222 to 402 constitute a Helicase ATP-binding domain; the sequence is KNFTRRVGDV…GLQFYNPKLF (181 aa). ATP is bound at residue 235–242; the sequence is ASTGSGKT. Residues 342 to 345 carry the DEAD box motif; that stretch reads DEAD. Residues 434-608 enclose the Helicase C-terminal domain; that stretch reads FLLRLLSEIN…EGQEEEAQVL (175 aa).

This sequence belongs to the DEAD box helicase family. DDX51/DBP6 subfamily. Associated with pre-ribosomal particles.

It localises to the nucleus. Its subcellular location is the nucleolus. It catalyses the reaction ATP + H2O = ADP + phosphate + H(+). In terms of biological role, ATP-binding RNA helicase involved in the biogenesis of 60S ribosomal subunits and is required for the normal formation of 25S and 5.8S rRNAs. This Vanderwaltozyma polyspora (strain ATCC 22028 / DSM 70294 / BCRC 21397 / CBS 2163 / NBRC 10782 / NRRL Y-8283 / UCD 57-17) (Kluyveromyces polysporus) protein is ATP-dependent RNA helicase DBP6 (DBP6).